Reading from the N-terminus, the 206-residue chain is uncharacterized protein (206 aa).

Positions 14–200 constitute a YrdC-like domain; the sequence is QRLINQAVEI…TPVVVREGVG (187 aa).

This sequence belongs to the SUA5 family.

This is an uncharacterized protein from Escherichia coli O6:H1 (strain CFT073 / ATCC 700928 / UPEC).